The following is a 320-amino-acid chain: Olfactory receptor 7C1 (320 aa).

Residues 1 to 25 lie on the Extracellular side of the membrane; it reads METGNQTHAQEFLLLGFSATSEIQF. Asparagine 5 is a glycosylation site (N-linked (GlcNAc...) asparagine). Residues 26–46 traverse the membrane as a helical segment; the sequence is ILFGLFLSMYLVTFTGNLLII. The Cytoplasmic portion of the chain corresponds to 47-54; that stretch reads LAICSDSH. Residues 55–75 form a helical membrane-spanning segment; sequence LHTPMYFFLSNLSFADLCFTS. Topologically, residues 76 to 99 are extracellular; that stretch reads TTVPKMLLNILTQNKFITYAGCLS. Cysteine 97 and cysteine 189 are oxidised to a cystine. The chain crosses the membrane as a helical span at residues 100 to 120; sequence QIFFFTSFGCLDNLLLTVMAY. Residues 121 to 139 are Cytoplasmic-facing; the sequence is DRFVAVCHPLHYTVIMNPQ. The helical transmembrane segment at 140 to 160 threads the bilayer; sequence LCGLLVLGSWCISVMGSLLET. Residues 161–197 are Extracellular-facing; the sequence is LTVLRLSFCTEMEIPHFFCDLLEVLKLACSDTFINNV. The helical transmembrane segment at 198–217 threads the bilayer; it reads VIYFATGVLGVISFTGIFFS. Over 218–237 the chain is Cytoplasmic; the sequence is YYKIVFSILRISSAGRKHKA. Residues 238 to 258 traverse the membrane as a helical segment; the sequence is FSTCGSHLSVVTLFYGTGFGV. The Extracellular segment spans residues 259 to 271; the sequence is YLSSAATPSSRTS. Residues 272–292 form a helical membrane-spanning segment; that stretch reads LVASVMYTMVTPMLNPFIYSL. The Cytoplasmic portion of the chain corresponds to 293 to 313; the sequence is RNTDMKRALGRLLSRATFFNG.

The protein belongs to the G-protein coupled receptor 1 family.

Its subcellular location is the cell membrane. In terms of biological role, odorant receptor. The sequence is that of Olfactory receptor 7C1 (OR7C1) from Homo sapiens (Human).